A 449-amino-acid chain; its full sequence is Glucose-6-phosphate isomerase (449 aa).

E290 acts as the Proton donor in catalysis. Active-site residues include H311 and K425.

This sequence belongs to the GPI family.

The protein localises to the cytoplasm. The enzyme catalyses alpha-D-glucose 6-phosphate = beta-D-fructose 6-phosphate. Its pathway is carbohydrate biosynthesis; gluconeogenesis. It participates in carbohydrate degradation; glycolysis; D-glyceraldehyde 3-phosphate and glycerone phosphate from D-glucose: step 2/4. In terms of biological role, catalyzes the reversible isomerization of glucose-6-phosphate to fructose-6-phosphate. This chain is Glucose-6-phosphate isomerase, found in Exiguobacterium sibiricum (strain DSM 17290 / CCUG 55495 / CIP 109462 / JCM 13490 / 255-15).